Reading from the N-terminus, the 49-residue chain is Large ribosomal subunit protein bL33B (49 aa).

Belongs to the bacterial ribosomal protein bL33 family.

This Staphylococcus saprophyticus subsp. saprophyticus (strain ATCC 15305 / DSM 20229 / NCIMB 8711 / NCTC 7292 / S-41) protein is Large ribosomal subunit protein bL33B.